Here is a 137-residue protein sequence, read N- to C-terminus: Acidic phospholipase A2 Vur-PL3 (137 aa).

An N-terminal signal peptide occupies residues 1–16; sequence MRTLWIVAVCLIGVEG. 7 disulfide bridges follow: cysteine 42/cysteine 131, cysteine 44/cysteine 60, cysteine 59/cysteine 111, cysteine 65/cysteine 137, cysteine 66/cysteine 104, cysteine 73/cysteine 97, and cysteine 91/cysteine 102. Tyrosine 43, glycine 45, and glycine 47 together coordinate Ca(2+). Histidine 63 is a catalytic residue. Position 64 (aspartate 64) interacts with Ca(2+). The active site involves aspartate 105.

The cofactor is Ca(2+). As to expression, expressed by the venom gland.

It is found in the secreted. The enzyme catalyses a 1,2-diacyl-sn-glycero-3-phosphocholine + H2O = a 1-acyl-sn-glycero-3-phosphocholine + a fatty acid + H(+). The polypeptide is Acidic phospholipase A2 Vur-PL3 (Vipera renardi (Steppe viper)).